The chain runs to 513 residues: Cytochrome P450 94A2 (513 aa).

The helical transmembrane segment at 7-24 threads the bilayer; it reads ISWLLFSTSLFWFLFLAT. Cys455 is a heme binding site.

Belongs to the cytochrome P450 family. The cofactor is heme. In terms of tissue distribution, weakly expressed in seedlings.

It localises to the endoplasmic reticulum membrane. Catalyzes the omega-hydroxylation of various fatty acids (FA). The substrate specificity is higher for myristate &gt; laurate = palmitate (C14&gt;C16=C12). In Vicia sativa (Spring vetch), this protein is Cytochrome P450 94A2 (CYP94A2).